Reading from the N-terminus, the 235-residue chain is MDLRLFKNIVILTGAGISAESGIRTFRDQDGLWEDHRIEDVATPEAFARNPALVQRFYNLRRAQLRDPNLAPNPAHQALVDLENLWEGNFLLVTQNVDNLHRRAGSKNLLHMHGRLDRVFCLHCDEHFEWLLDLAVDQPCPHCGRKGGVRPDIVWFGEMPHHMEEIYEALDKADYFISIGTSGNVYPAAGFVRLAWKAKKIEINLKDTEISPAFDEHFVGPASTEVPRFITQFLE.

A Deacetylase sirtuin-type domain is found at 1–235 (MDLRLFKNIV…VPRFITQFLE (235 aa)). 14 to 33 (GAGISAESGIRTFRDQDGLW) is a binding site for NAD(+). Residues Tyr-58 and Arg-61 each contribute to the substrate site. 95–98 (QNVD) lines the NAD(+) pocket. His-113 acts as the Proton acceptor in catalysis. Residues Cys-121, Cys-124, Cys-140, and Cys-143 each coordinate Zn(2+). NAD(+) contacts are provided by residues 180-182 (GTS), 204-206 (NLK), and Ala-222.

It belongs to the sirtuin family. Class III subfamily. It depends on Zn(2+) as a cofactor.

Its subcellular location is the cytoplasm. It carries out the reaction N(6)-acetyl-L-lysyl-[protein] + NAD(+) + H2O = 2''-O-acetyl-ADP-D-ribose + nicotinamide + L-lysyl-[protein]. It catalyses the reaction N(6)-succinyl-L-lysyl-[protein] + NAD(+) + H2O = 2''-O-succinyl-ADP-D-ribose + nicotinamide + L-lysyl-[protein]. In terms of biological role, NAD-dependent lysine deacetylase and desuccinylase that specifically removes acetyl and succinyl groups on target proteins. Modulates the activities of several proteins which are inactive in their acylated form. The polypeptide is NAD-dependent protein deacylase (Bdellovibrio bacteriovorus (strain ATCC 15356 / DSM 50701 / NCIMB 9529 / HD100)).